The sequence spans 745 residues: F-box only protein 30 (745 aa).

A TRAF-type zinc finger spans residues 48-109; the sequence is EHRLLCPFER…SYADRKSYEN (62 aa). Disordered stretches follow at residues 211 to 231 and 305 to 324; these read NTSVPNDMDEQQNARESLEDQ and GDSKQSNLTNGDCVASSDGT. Residues 222–231 are compositionally biased toward basic and acidic residues; sequence QNARESLEDQ. Polar residues predominate over residues 305–314; the sequence is GDSKQSNLTN. The 49-residue stretch at 610–658 folds into the F-box domain; that stretch reads NDHLSSLPFEVLQHIAGFLDGFSLCQLSCVSKLMRDVCGSLLQSRGMVI.

Part of a SCF (SKP1-cullin-F-box) protein ligase complex. Interacts with SKP1, CUL1 and RBX1/ROC1. Auto-ubiquitinated. In terms of processing, may be neddylated. Neddylation may be required for E3 ligase activity.

Its pathway is protein modification; protein ubiquitination. Its function is as follows. Substrate-recognition component of the SCF (SKP1-CUL1-F-box protein)-type E3 ubiquitin ligase complex. Required for muscle atrophy following denervation. This Homo sapiens (Human) protein is F-box only protein 30 (FBXO30).